Consider the following 588-residue polypeptide: Probable fumarate reductase Ifc3 (588 aa).

An N-terminal signal peptide occupies residues 1-22; sequence MKLKYLVSAMALVVLSSGTAMA. Residues histidine 31, cysteine 37, cysteine 40, histidine 41, cysteine 58, cysteine 61, histidine 62, histidine 78, histidine 81, cysteine 87, cysteine 90, histidine 91, glycine 93, histidine 94, cysteine 101, cysteine 104, and histidine 105 each coordinate heme c. Positions 135–588 are flavoprotein-like; sequence AIAAGPSETT…DNAAKHALDK (454 aa). Positions 154, 173, 181, 182, 187, and 188 each coordinate FAD. Position 187 (glycine 187) interacts with fumarate. Residue glycine 187 participates in succinate binding. Arginine 218 contributes to the heme c binding site. 2 residues coordinate FAD: valine 295 and aspartate 361. Succinate contacts are provided by histidine 382, serine 394, and glutamate 395. Residues serine 394 and glutamate 395 each contribute to the fumarate site. Catalysis depends on arginine 419, which acts as the Proton donor. Fumarate is bound at residue histidine 521. Histidine 521 provides a ligand contact to succinate. FAD is bound at residue glutamate 551. Residues arginine 561 and glycine 564 each contribute to the fumarate site. Residues arginine 561 and glycine 564 each coordinate succinate. Positions 564, 566, and 567 each coordinate FAD.

In terms of assembly, homodimer. The cofactor is FAD. Heme c is required as a cofactor.

The protein resides in the periplasm. Flavocytochrome that catalyzes the reduction of fumarate to succinate in vitro. Is essentially unidirectional, catalyzing only fumarate reduction. In vitro, can use the artificial electron donor methyl viologen. May be involved in an alternative route for electron transport to Fe(3+). The sequence is that of Probable fumarate reductase Ifc3 from Shewanella frigidimarina (strain NCIMB 400).